The sequence spans 303 residues: D-alanyl-D-alanine carboxypeptidase (303 aa).

Residues 7 to 23 (LLLLLFLIYLGYDYVNE) form a helical membrane-spanning segment. The segment at 37 to 56 (DQNPKEHLENSGTSENTQEK) is disordered. Substrate contacts are provided by residues 154–156 (YAL) and Ser161. The Zn(2+) site is built by His163 and Asp170. The active-site Proton donor/acceptor is the Glu213. His216 contacts Zn(2+).

It belongs to the peptidase M15B family. Zn(2+) serves as cofactor.

Its subcellular location is the cell membrane. The DD-carboxypeptidase activity is not inhibited by beta-lactam antibiotics. Functionally, cleaves the C-terminal D-alanine residue of UDP-muramyl-pentapeptide (UDP-MurNAc-L-Ala-D-Glu-mDAP-D-Ala-D-Ala) or diacetyl-L-Lys-D-Ala-D-Ala. However the physiological substrate likely contains L-Lys instead of mDAP at the third position of the pentapeptide. Also releases the C-terminal D-lactate from UDP-MurNAc-L-Ala-D-Glu-mDAP-D-Ala-D-lactate, a depsipeptide produced by the vancomycin resistance protein VanA. Therefore, VanY should contribute in vivo to the hydrolysis of both the D-alanyl-D-alanine- and the depsipeptide-containing peptidoglycan precursors. Is not necessary for vancomycin resistance of E.faecium BM4147 and perhaps not W14-9. Does not display transpeptidase or beta-lactamase activities. In Enterococcus faecium (Streptococcus faecium), this protein is D-alanyl-D-alanine carboxypeptidase.